The primary structure comprises 323 residues: Galectin-4 (323 aa).

Galectin domains are found at residues 19–150 and 194–323; these read YYKP…INFI and YKTR…YVQI. 256-262 provides a ligand contact to a beta-D-galactoside; the sequence is WGAEERK.

In terms of assembly, monomer.

Galectin that binds lactose and a related range of sugars. May be involved in the assembly of adherens junctions. The polypeptide is Galectin-4 (LGALS4) (Sus scrofa (Pig)).